A 212-amino-acid chain; its full sequence is Probable chemoreceptor glutamine deamidase CheD (212 aa).

It belongs to the CheD family.

It carries out the reaction L-glutaminyl-[protein] + H2O = L-glutamyl-[protein] + NH4(+). In terms of biological role, probably deamidates glutamine residues to glutamate on methyl-accepting chemotaxis receptors (MCPs), playing an important role in chemotaxis. This Bordetella parapertussis (strain 12822 / ATCC BAA-587 / NCTC 13253) protein is Probable chemoreceptor glutamine deamidase CheD.